The sequence spans 382 residues: Two-component response regulator ARR14 (382 aa).

The region spanning 12-128 (RILVVDDDTS…ELKNIWQHVV (117 aa)) is the Response regulatory domain. Position 63 is a 4-aspartylphosphate (aspartate 63). Over residues 171–181 (CRNKKKKKKRS) the composition is skewed to basic residues. The segment at 171–193 (CRNKKKKKKRSVDRDDNEDDLLL) is disordered. A Nuclear localization signal motif is present at residues 199 to 202 (KKSR). The segment at residues 202–252 (RVVWSIELHQQFVNAVNKLGIDKAVPKRILELMNVPGLSRENVASHLQKFR) is a DNA-binding region (myb-like GARP).

The protein belongs to the ARR family. Type-B subfamily. Binds the target DNA as a monomer. In terms of processing, two-component system major event consists of a His-to-Asp phosphorelay between a sensor histidine kinase (HK) and a response regulator (RR). In plants, the His-to-Asp phosphorelay involves an additional intermediate named Histidine-containing phosphotransfer protein (HPt). This multistep phosphorelay consists of a His-Asp-His-Asp sequential transfer of a phosphate group between first a His and an Asp of the HK protein, followed by the transfer to a conserved His of the HPt protein and finally the transfer to an Asp in the receiver domain of the RR protein. Predominantly expressed in young leaf tissue.

The protein resides in the nucleus. Transcriptional activator that binds specifically to the DNA sequence 5'-[AG]GATT-3'. Functions as a response regulator involved in His-to-Asp phosphorelay signal transduction system. Phosphorylation of the Asp residue in the receiver domain activates the ability of the protein to promote the transcription of target genes. Could directly activate some type-A response regulators in response to cytokinins. The chain is Two-component response regulator ARR14 (ARR14) from Arabidopsis thaliana (Mouse-ear cress).